A 177-amino-acid chain; its full sequence is Large ribosomal subunit protein uL6 (177 aa).

The protein belongs to the universal ribosomal protein uL6 family. As to quaternary structure, part of the 50S ribosomal subunit.

Functionally, this protein binds to the 23S rRNA, and is important in its secondary structure. It is located near the subunit interface in the base of the L7/L12 stalk, and near the tRNA binding site of the peptidyltransferase center. This is Large ribosomal subunit protein uL6 from Tolumonas auensis (strain DSM 9187 / NBRC 110442 / TA 4).